We begin with the raw amino-acid sequence, 118 residues long: Large ribosomal subunit protein bL20 (118 aa).

It belongs to the bacterial ribosomal protein bL20 family.

In terms of biological role, binds directly to 23S ribosomal RNA and is necessary for the in vitro assembly process of the 50S ribosomal subunit. It is not involved in the protein synthesizing functions of that subunit. The protein is Large ribosomal subunit protein bL20 of Campylobacter concisus (strain 13826).